A 286-amino-acid polypeptide reads, in one-letter code: N-alpha-acetyltransferase 80 (286 aa).

Positions Thr-33–Ala-54 are disordered. The N-acetyltransferase domain maps to Leu-60–Thr-207. Substrate contacts are provided by residues Arg-85 and Arg-90–Ser-93. Residues Val-141–Val-143, Gly-149–Arg-154, and Gln-179 each bind acetyl-CoA. Positions Phe-212 to Thr-269 are disordered. Residues Pro-236–Pro-248 are compositionally biased toward pro residues.

It belongs to the acetyltransferase family. In terms of tissue distribution, strongly expressed in heart and skeletal muscle, followed by brain and pancreas, with weak expression in kidney, liver, and lung and no expression in placenta.

Its subcellular location is the cytoplasm. The protein localises to the cytosol. The catalysed reaction is N-terminal L-aspartyl-L-aspartyl-L-aspartyl-[protein] + acetyl-CoA = N-terminal N-acetyl-L-aspartyl-L-aspartyl-L-aspartyl-[protein] + CoA + H(+). The enzyme catalyses N-terminal L-glutamyl-L-glutamyl-L-glutamyl-[protein] + acetyl-CoA = N-terminal N-acetyl-L-glutamyl-L-glutamyl-L-glutamyl-[protein] + CoA + H(+). N-alpha-acetyltransferase that specifically mediates the acetylation of the acidic amino terminus of processed forms of beta- and gamma-actin (ACTB and ACTG, respectively). N-terminal acetylation of processed beta- and gamma-actin regulates actin filament depolymerization and elongation. In vivo, preferentially displays N-terminal acetyltransferase activity towards acid N-terminal sequences starting with Asp-Asp-Asp and Glu-Glu-Glu. In vitro, shows high activity towards Met-Asp-Glu-Leu and Met-Asp-Asp-Asp. May act as a tumor suppressor. The protein is N-alpha-acetyltransferase 80 of Homo sapiens (Human).